We begin with the raw amino-acid sequence, 272 residues long: Protein UL11 (272 aa).

The first 31 residues, 1–31, serve as a signal peptide directing secretion; sequence MLFRYITFHREKVLYLTAACIFGVYISLHDA. The Extracellular portion of the chain corresponds to 32–224; sequence CIPVVGKIGT…PLQPSPQHQH (193 aa). N-linked (GlcNAc...) asparagine; by host glycans are attached at residues Asn-42, Asn-93, Asn-100, and Asn-142. A disordered region spans residues 142–200; sequence NGTFPTTTTKKPTTTTRTTTTTTQRTTTTRTTTTAKKTTISTTHHKHPSPKKSTTPNSH. The span at 147 to 183 shows a compositional bias: low complexity; that stretch reads TTTTKKPTTTTRTTTTTTQRTTTTRTTTTAKKTTIST. Residues 225-245 traverse the membrane as a helical segment; that stretch reads LATHALWVLAVVIVIIIIIIF. Residues 246-272 lie on the Cytoplasmic side of the membrane; sequence YFRIPQKLWLLWQHDKHGIVLIPQTDL.

This sequence belongs to the RL11 family. Interacts with host PTPRC; this interaction affects T-cell signaling. Glycosylated.

The protein localises to the host cell membrane. It is found in the host endoplasmic reticulum. Plays a role in the modulation of host immune response by modulating T-cell function. Interacts with host PTPRC/CD45 and thereby reduces host TCR signaling and T-cell proliferation. This Human cytomegalovirus (strain Merlin) (HHV-5) protein is Protein UL11 (UL11).